A 460-amino-acid chain; its full sequence is tRNA modification GTPase MnmE (460 aa).

The (6S)-5-formyl-5,6,7,8-tetrahydrofolate site is built by Arg29, Glu91, and Lys132. In terms of domain architecture, TrmE-type G spans 227 to 383 (GISIALIGKT…LIDTIIKKCG (157 aa)). Asn237 lines the K(+) pocket. Residues 237 to 242 (NVGKSS), 256 to 262 (TNIPGTT), and 281 to 284 (DTAG) contribute to the GTP site. Ser241 contributes to the Mg(2+) binding site. Thr256, Ile258, and Thr261 together coordinate K(+). Thr262 serves as a coordination point for Mg(2+). Lys460 is a binding site for (6S)-5-formyl-5,6,7,8-tetrahydrofolate.

Belongs to the TRAFAC class TrmE-Era-EngA-EngB-Septin-like GTPase superfamily. TrmE GTPase family. In terms of assembly, homodimer. Heterotetramer of two MnmE and two MnmG subunits. The cofactor is K(+).

It is found in the cytoplasm. Its function is as follows. Exhibits a very high intrinsic GTPase hydrolysis rate. Involved in the addition of a carboxymethylaminomethyl (cmnm) group at the wobble position (U34) of certain tRNAs, forming tRNA-cmnm(5)s(2)U34. This Prochlorococcus marinus (strain AS9601) protein is tRNA modification GTPase MnmE.